We begin with the raw amino-acid sequence, 324 residues long: Acetyl-coenzyme A carboxylase carboxyl transferase subunit alpha (324 aa).

One can recognise a CoA carboxyltransferase C-terminal domain in the interval 37–291; that stretch reads ILEEKLENLE…DLMIRKTFEQ (255 aa).

This sequence belongs to the AccA family. In terms of assembly, acetyl-CoA carboxylase is a heterohexamer composed of biotin carboxyl carrier protein (AccB), biotin carboxylase (AccC) and two subunits each of ACCase subunit alpha (AccA) and ACCase subunit beta (AccD).

It is found in the cytoplasm. The enzyme catalyses N(6)-carboxybiotinyl-L-lysyl-[protein] + acetyl-CoA = N(6)-biotinyl-L-lysyl-[protein] + malonyl-CoA. Its pathway is lipid metabolism; malonyl-CoA biosynthesis; malonyl-CoA from acetyl-CoA: step 1/1. Functionally, component of the acetyl coenzyme A carboxylase (ACC) complex. First, biotin carboxylase catalyzes the carboxylation of biotin on its carrier protein (BCCP) and then the CO(2) group is transferred by the carboxyltransferase to acetyl-CoA to form malonyl-CoA. This chain is Acetyl-coenzyme A carboxylase carboxyl transferase subunit alpha, found in Bacillus cereus (strain B4264).